The sequence spans 511 residues: 2,3-bisphosphoglycerate-independent phosphoglycerate mutase (511 aa).

2 residues coordinate Mn(2+): Asp-14 and Ser-64. Catalysis depends on Ser-64, which acts as the Phosphoserine intermediate. Substrate contacts are provided by residues His-125, Arg-155–Asp-156, Arg-187, Arg-193, Arg-259–Arg-262, and Lys-333. Residues Asp-400, His-404, Asp-441, His-442, and His-460 each coordinate Mn(2+).

Belongs to the BPG-independent phosphoglycerate mutase family. In terms of assembly, monomer. Mn(2+) is required as a cofactor.

The catalysed reaction is (2R)-2-phosphoglycerate = (2R)-3-phosphoglycerate. The protein operates within carbohydrate degradation; glycolysis; pyruvate from D-glyceraldehyde 3-phosphate: step 3/5. Functionally, catalyzes the interconversion of 2-phosphoglycerate and 3-phosphoglycerate. The polypeptide is 2,3-bisphosphoglycerate-independent phosphoglycerate mutase (Idiomarina loihiensis (strain ATCC BAA-735 / DSM 15497 / L2-TR)).